The primary structure comprises 444 residues: Serine carboxypeptidase-like 50 (444 aa).

A signal peptide spans 1–22 (MEQATTLFILLSTLLLAVSVES). C79 and C308 are joined by a disulfide. Residue S170 is part of the active site. A glycan (N-linked (GlcNAc...) asparagine) is linked at N263. D345 is an active-site residue. The N-linked (GlcNAc...) asparagine glycan is linked to N361. Residue H403 is part of the active site.

This sequence belongs to the peptidase S10 family. As to expression, ubiquitous.

It localises to the secreted. In terms of biological role, probable carboxypeptidase. This Arabidopsis thaliana (Mouse-ear cress) protein is Serine carboxypeptidase-like 50 (SCPL50).